The sequence spans 824 residues: MEDDAPMNLCNEQFEEIEDSPIDDNDNESFYNADGDVELEEEEVHETPKNFKNGGRFKTNMTNPKVNDLTTIEEKNEDLRSAASSRSASRPASVMSDKSFSSQFEFQSGGENAIEEYTNQVFADENKADLLFPETSKFMNGASPPKDKHHSWEPSIHHYDKQPPPDIQTNSPVFGNLNHRKNKLIPQARAKPGANDNEIVERDNDENVPTTSDKSAFITSPMNSTNHDEKTSTPKRPTNRKIGQYQGPNFDLSSIYVGSPQHQNTSISTGQQMPTSSYSHAHSETMMTNQTINESMVRRVLNGNNKNQDLFAALEEARKRRAAQPSKPDFRINTTRTRVPIKPTSARHSGNVVSSTSNDNTTAASSKDLTTSRKAMETFRQNASMADATNSNTASMTSILSTISTARTDISRSSRNHGGGFSNTSVSTVIPANNGNVSLSHGRDGRDSVSSVRTMSRASSTSTVYAGSTFSGVSKPLRIHAKRVAFGCVAVGETLRVEVEVENISDRQCLVRASTDSTTPVYQILDNKLTMVDPKKSIKFQVSFSPSSVGRYQVIMSIEVPAQNFIHKIPMWGNGGIAKFVPTSPDLQQTINQSEYAMCTSCAKRISFKISNSAGTRDGFAMIKVFDSAMRQLPDGCVAFFPAPGFIVKKKSDKRVDIRIDSSYIDLHDENNFRTSSSLSTASTTSSFQRRILPGAKFFVHVVWGEETMRTRLRLLEVRTGQHQLIDGHDFTSFQFSDEEVLRAVPVGFPAIKPEDRDLFAASYRSFFINFFTSTTEFRAATSRKKKEICSNDDSTLLETTAFRNQTFVNDVTIVPNTRFSNRK.

Acidic residues-rich tracts occupy residues 16-27 (EIEDSPIDDNDN) and 35-44 (GDVELEEEEV). The interval 16-98 (EIEDSPIDDN…SRPASVMSDK (83 aa)) is disordered. The span at 59–70 (TNMTNPKVNDLT) shows a compositional bias: polar residues. The segment covering 81–98 (SAASSRSASRPASVMSDK) has biased composition (low complexity). Positions 111–131 (ENAIEEYTNQVFADENKADLL) form a coiled coil. The interval 189-252 (RAKPGANDNE…GQYQGPNFDL (64 aa)) is disordered. The span at 207–225 (NVPTTSDKSAFITSPMNST) shows a compositional bias: polar residues. Residues 304–324 (NNKNQDLFAALEEARKRRAAQ) are a coiled coil. Disordered stretches follow at residues 342–372 (KPTS…LTTS) and 433–455 (NNGN…VRTM). Low complexity predominate over residues 349–366 (SGNVVSSTSNDNTTAASS).

As to quaternary structure, interacts with sas-7 (via C-terminus); may be recruited to centrioles by sas-7.

The protein resides in the cytoplasm. The protein localises to the cytoskeleton. It is found in the microtubule organizing center. Its subcellular location is the centrosome. It localises to the centriole. Required both for centrosome duplication and maturation. Required for pericentriolar material (PCM) recruitment. The polypeptide is Spindle-defective protein 2 (Caenorhabditis elegans).